The chain runs to 292 residues: Claudin-23 (292 aa).

Over 1–3 the chain is Cytoplasmic; sequence MRT. A helical membrane pass occupies residues 4–24; that stretch reads PVVMTLGMVLAPCGLLLNLTG. Over 25 to 81 the chain is Extracellular; sequence TLAPGWRLVKGFLNQPVDVELYQGLWDMCREQSSRERECGQTDQWGYFEAQPVLVAR. The chain crosses the membrane as a helical span at residues 82–102; sequence ALMVTSLAATVLGLLLASLGV. The Cytoplasmic portion of the chain corresponds to 103–110; it reads RCWQDEPN. Residues 111–131 form a helical membrane-spanning segment; it reads FVLAGLSGVVLFVAGLLGLIP. The Extracellular segment spans residues 132–160; it reads VSWYNHFLGDRDVLPAPASPVTVQVSYSL. A helical membrane pass occupies residues 161-181; that stretch reads VLGYLGSCLLLLGGFSLALSF. The Cytoplasmic segment spans residues 182 to 292; that stretch reads APWCDERCRR…DSSLPCDSDL (111 aa). Residues 222 to 292 are disordered; sequence KYYSDGQHRP…DSSLPCDSDL (71 aa). Over residues 273–282 the composition is skewed to polar residues; sequence DAPSCSTHPC.

The protein belongs to the claudin family. Expressed in germinal center B-cells, placenta, stomach as well as in colon tumor.

The protein localises to the cell junction. Its subcellular location is the tight junction. It localises to the cell membrane. Functionally, plays a major role in tight junction-specific obliteration of the intercellular space, through calcium-independent cell-adhesion activity. The chain is Claudin-23 (CLDN23) from Homo sapiens (Human).